The chain runs to 594 residues: Beta-fructofuranosidase, insoluble isoenzyme CWINV3 (594 aa).

Residues 1–28 (MAKLNRSNIGLSLLLSMFLANFITDLEA) form the signal peptide. Substrate contacts are provided by residues 50-53 (WMND), glutamine 69, tryptophan 77, and 113-114 (WS). The active site involves aspartate 53. N-linked (GlcNAc...) asparagine glycosylation is present at asparagine 147. 179-180 (RD) contacts substrate. Residue asparagine 217 is glycosylated (N-linked (GlcNAc...) asparagine). Residue glutamate 235 participates in substrate binding. N-linked (GlcNAc...) asparagine glycans are attached at residues asparagine 297 and asparagine 329. An intrachain disulfide couples cysteine 428 to cysteine 480.

Belongs to the glycosyl hydrolase 32 family. Expressed in seedlings, leaves, flowers, and seeds.

The protein resides in the secreted. Its subcellular location is the extracellular space. It localises to the apoplast. It is found in the cell wall. The enzyme catalyses Hydrolysis of terminal, non-reducing (2-&gt;1)- and (2-&gt;6)-linked beta-D-fructofuranose residues in fructans.. In terms of biological role, 6-fructan exohydrolase that can use phlein, levan, neokestose, levanbiose, 6-kestose, and 1-kestose as substrates. The chain is Beta-fructofuranosidase, insoluble isoenzyme CWINV3 (CWINV3) from Arabidopsis thaliana (Mouse-ear cress).